A 181-amino-acid chain; its full sequence is Acireductone dioxygenase (181 aa).

Residues histidine 91, histidine 93, glutamate 97, and histidine 136 each contribute to the Fe(2+) site. 4 residues coordinate Ni(2+): histidine 91, histidine 93, glutamate 97, and histidine 136.

This sequence belongs to the acireductone dioxygenase (ARD) family. Monomer. Interacts with MMP14. The cofactor is Fe(2+). Ni(2+) serves as cofactor.

It localises to the cytoplasm. The protein resides in the nucleus. It is found in the cell membrane. The enzyme catalyses 1,2-dihydroxy-5-(methylsulfanyl)pent-1-en-3-one + O2 = 4-methylsulfanyl-2-oxobutanoate + formate + 2 H(+). It catalyses the reaction 1,2-dihydroxy-5-(methylsulfanyl)pent-1-en-3-one + O2 = 3-(methylsulfanyl)propanoate + CO + formate + 2 H(+). Its pathway is amino-acid biosynthesis; L-methionine biosynthesis via salvage pathway; L-methionine from S-methyl-5-thio-alpha-D-ribose 1-phosphate: step 5/6. Catalyzes 2 different reactions between oxygen and the acireductone 1,2-dihydroxy-3-keto-5-methylthiopentene (DHK-MTPene) depending upon the metal bound in the active site. Fe-containing acireductone dioxygenase (Fe-ARD) produces formate and 2-keto-4-methylthiobutyrate (KMTB), the alpha-ketoacid precursor of methionine in the methionine recycle pathway. Ni-containing acireductone dioxygenase (Ni-ARD) produces methylthiopropionate, carbon monoxide and formate, and does not lie on the methionine recycle pathway. The chain is Acireductone dioxygenase (adi1) from Danio rerio (Zebrafish).